We begin with the raw amino-acid sequence, 85 residues long: MSDGQKTKTTVDIYGQQFTIVGDESKSHMRHVASIVDDKMREINEKNPYLDINKLAVLTAVNVVHDYLKLKEELERLKGQIKEKD.

The stretch at 60–85 (AVNVVHDYLKLKEELERLKGQIKEKD) forms a coiled coil.

This sequence belongs to the ZapA family. Type 2 subfamily. As to quaternary structure, homodimer. Interacts with FtsZ.

It localises to the cytoplasm. Activator of cell division through the inhibition of FtsZ GTPase activity, therefore promoting FtsZ assembly into bundles of protofilaments necessary for the formation of the division Z ring. It is recruited early at mid-cell but it is not essential for cell division. In Bacillus licheniformis (strain ATCC 14580 / DSM 13 / JCM 2505 / CCUG 7422 / NBRC 12200 / NCIMB 9375 / NCTC 10341 / NRRL NRS-1264 / Gibson 46), this protein is Cell division protein ZapA.